The primary structure comprises 216 residues: Pyrophosphatase PpaX (216 aa).

D9 (nucleophile) is an active-site residue.

It belongs to the HAD-like hydrolase superfamily. PpaX family. The cofactor is Mg(2+).

The enzyme catalyses diphosphate + H2O = 2 phosphate + H(+). Hydrolyzes pyrophosphate formed during P-Ser-HPr dephosphorylation by HPrK/P. Might play a role in controlling the intracellular pyrophosphate pool. This is Pyrophosphatase PpaX from Bacillus anthracis (strain CDC 684 / NRRL 3495).